Reading from the N-terminus, the 195-residue chain is IMP cyclohydrolase (195 aa).

It belongs to the archaeal IMP cyclohydrolase family.

The enzyme catalyses IMP + H2O = 5-formamido-1-(5-phospho-D-ribosyl)imidazole-4-carboxamide. It functions in the pathway purine metabolism; IMP biosynthesis via de novo pathway; IMP from 5-formamido-1-(5-phospho-D-ribosyl)imidazole-4-carboxamide: step 1/1. Its function is as follows. Catalyzes the cyclization of 5-formylamidoimidazole-4-carboxamide ribonucleotide to IMP. The chain is IMP cyclohydrolase from Haloquadratum walsbyi (strain DSM 16790 / HBSQ001).